The following is a 406-amino-acid chain: Bifunctional enzyme IspD/IspF (406 aa).

The segment at M1–V246 is 2-C-methyl-D-erythritol 4-phosphate cytidylyltransferase. The interval R247–R406 is 2-C-methyl-D-erythritol 2,4-cyclodiphosphate synthase. The a divalent metal cation site is built by D253 and H255. 4-CDP-2-C-methyl-D-erythritol 2-phosphate contacts are provided by residues D253–H255 and H279–S280. Residue H287 participates in a divalent metal cation binding. Residues D301–G303, T377–E380, F384, and R387 each bind 4-CDP-2-C-methyl-D-erythritol 2-phosphate.

This sequence in the N-terminal section; belongs to the IspD/TarI cytidylyltransferase family. IspD subfamily. It in the C-terminal section; belongs to the IspF family. Requires a divalent metal cation as cofactor.

The catalysed reaction is 2-C-methyl-D-erythritol 4-phosphate + CTP + H(+) = 4-CDP-2-C-methyl-D-erythritol + diphosphate. It carries out the reaction 4-CDP-2-C-methyl-D-erythritol 2-phosphate = 2-C-methyl-D-erythritol 2,4-cyclic diphosphate + CMP. It participates in isoprenoid biosynthesis; isopentenyl diphosphate biosynthesis via DXP pathway; isopentenyl diphosphate from 1-deoxy-D-xylulose 5-phosphate: step 2/6. Its pathway is isoprenoid biosynthesis; isopentenyl diphosphate biosynthesis via DXP pathway; isopentenyl diphosphate from 1-deoxy-D-xylulose 5-phosphate: step 4/6. Functionally, bifunctional enzyme that catalyzes the formation of 4-diphosphocytidyl-2-C-methyl-D-erythritol from CTP and 2-C-methyl-D-erythritol 4-phosphate (MEP) (IspD), and catalyzes the conversion of 4-diphosphocytidyl-2-C-methyl-D-erythritol 2-phosphate (CDP-ME2P) to 2-C-methyl-D-erythritol 2,4-cyclodiphosphate (ME-CPP) with a corresponding release of cytidine 5-monophosphate (CMP) (IspF). This Rhizobium leguminosarum bv. trifolii (strain WSM2304) protein is Bifunctional enzyme IspD/IspF.